Here is a 1294-residue protein sequence, read N- to C-terminus: RNA replication protein (1294 aa).

In terms of domain architecture, Alphavirus-like MT spans 59 to 224 (NPFAVKVHSH…SHEFKQLEWL (166 aa)). The (+)RNA virus helicase ATP-binding domain occupies 541–698 (LKKQSKDWLA…TYQPFCRYYL (158 aa)). Residue 570–577 (GAGGSGKS) coordinates ATP. The (+)RNA virus helicase C-terminal domain occupies 699-832 (NITHRNKPDL…CVREEKMNEI (134 aa)). A RdRp catalytic domain is found at 1071–1178 (RTCFSNDFTA…DYVASVKPSF (108 aa)).

Belongs to the potexvirus/carlavirus RNA replication protein family.

It carries out the reaction RNA(n) + a ribonucleoside 5'-triphosphate = RNA(n+1) + diphosphate. The enzyme catalyses ATP + H2O = ADP + phosphate + H(+). Functionally, RNA replication. The central part of this protein possibly functions as an ATP-binding helicase. This chain is RNA replication protein, found in Trifolium (WCMV).